Here is a 477-residue protein sequence, read N- to C-terminus: Bifunctional enzyme PyrF/PyrE (477 aa).

Residues M1–S273 are OMP decarboxylase. The active-site Proton donor is the K96. The tract at residues V274 to E477 is orotate phosphoribosyltransferase. 5-phospho-alpha-D-ribose 1-diphosphate contacts are provided by residues R374, K375, K378, H380, and D400–S408.

It in the N-terminal section; belongs to the OMP decarboxylase family. Type 2 subfamily. In the C-terminal section; belongs to the purine/pyrimidine phosphoribosyltransferase family. Mg(2+) is required as a cofactor.

The enzyme catalyses orotidine 5'-phosphate + H(+) = UMP + CO2. The catalysed reaction is orotidine 5'-phosphate + diphosphate = orotate + 5-phospho-alpha-D-ribose 1-diphosphate. Its pathway is pyrimidine metabolism; UMP biosynthesis via de novo pathway; UMP from orotate: step 1/2. The protein operates within pyrimidine metabolism; UMP biosynthesis via de novo pathway; UMP from orotate: step 2/2. In terms of biological role, catalyzes the transfer of a ribosyl phosphate group from 5-phosphoribose 1-diphosphate to orotate, leading to the formation of orotidine monophosphate (OMP). Its function is as follows. Catalyzes the decarboxylation of orotidine monophosphate (OMP) to uridine monophosphate (UMP). This Nostoc sp. (strain PCC 7120 / SAG 25.82 / UTEX 2576) protein is Bifunctional enzyme PyrF/PyrE (pyrFE).